Consider the following 642-residue polypeptide: Threonine--tRNA ligase (642 aa).

A TGS domain is found at 1 to 61; it reads MPVITLPDGS…ESDAQLAIIT (61 aa). The catalytic stretch occupies residues 243-534; the sequence is DHRKIGKQLD…LTEEYAGFFP (292 aa). Zn(2+)-binding residues include C334, H385, and H511.

It belongs to the class-II aminoacyl-tRNA synthetase family. Homodimer. It depends on Zn(2+) as a cofactor.

Its subcellular location is the cytoplasm. It carries out the reaction tRNA(Thr) + L-threonine + ATP = L-threonyl-tRNA(Thr) + AMP + diphosphate + H(+). Catalyzes the attachment of threonine to tRNA(Thr) in a two-step reaction: L-threonine is first activated by ATP to form Thr-AMP and then transferred to the acceptor end of tRNA(Thr). Also edits incorrectly charged L-seryl-tRNA(Thr). The sequence is that of Threonine--tRNA ligase from Yersinia pseudotuberculosis serotype O:1b (strain IP 31758).